The chain runs to 319 residues: MKKSLTSLDLNLLLCLQLLMQERSVTKAAKRMNVTPSAVSKSLAKLRAWFDDPLFVNTPLGLAPTPLMVSMEQSLADWMQMGNQLLDKPHHQTPRGLKFELAAESPLMMIMFNSLSQQIYQRYPQATIKVRNWDYDSLEAITRGKVDIGFTGRESHPRSRELISLLPLAIDFEVLFSDLPWVWLQEDHPALREAWDLDTFLRYPHISICWEQSDTWALDDVLQEMGRKRHIALSLPGFEQSLFMAAQPGHTLIATAPRYCQHYNQLHQLPLVARPLPFDAQQREKLMVPFTLLWHKRNSHNPKIVWLRQAINTLCRRLI.

The region spanning 8–65 is the HTH lysR-type domain; it reads LDLNLLLCLQLLMQERSVTKAAKRMNVTPSAVSKSLAKLRAWFDDPLFVNTPLGLAPT. The segment at residues 25 to 44 is a DNA-binding region (H-T-H motif); that stretch reads VTKAAKRMNVTPSAVSKSLA.

This sequence belongs to the LysR transcriptional regulatory family.

In terms of biological role, involved in anaerobic NO protection. In Salmonella typhi, this protein is HTH-type transcriptional regulator YidZ.